The sequence spans 376 residues: Succinyl-diaminopimelate desuccinylase (376 aa).

His-68 contributes to the Zn(2+) binding site. Asp-70 is a catalytic residue. Residue Asp-101 coordinates Zn(2+). Glu-135 functions as the Proton acceptor in the catalytic mechanism. Positions 136, 164, and 349 each coordinate Zn(2+).

This sequence belongs to the peptidase M20A family. DapE subfamily. Homodimer. Zn(2+) serves as cofactor. It depends on Co(2+) as a cofactor.

It catalyses the reaction N-succinyl-(2S,6S)-2,6-diaminopimelate + H2O = (2S,6S)-2,6-diaminopimelate + succinate. It functions in the pathway amino-acid biosynthesis; L-lysine biosynthesis via DAP pathway; LL-2,6-diaminopimelate from (S)-tetrahydrodipicolinate (succinylase route): step 3/3. In terms of biological role, catalyzes the hydrolysis of N-succinyl-L,L-diaminopimelic acid (SDAP), forming succinate and LL-2,6-diaminopimelate (DAP), an intermediate involved in the bacterial biosynthesis of lysine and meso-diaminopimelic acid, an essential component of bacterial cell walls. This chain is Succinyl-diaminopimelate desuccinylase, found in Marinobacter nauticus (strain ATCC 700491 / DSM 11845 / VT8) (Marinobacter aquaeolei).